The sequence spans 537 residues: CTP synthase (537 aa).

Positions 1–267 are amidoligase domain; the sequence is MAKFVFVTGG…ADIVLDKLGI (267 aa). A CTP-binding site is contributed by S13. Residue S13 coordinates UTP. Position 14-19 (14-19) interacts with ATP; that stretch reads SLGKGI. Position 54 (Y54) interacts with L-glutamine. Position 71 (D71) interacts with ATP. Residues D71 and E141 each coordinate Mg(2+). CTP-binding positions include 148 to 150, 188 to 193, and K224; these read DIE and KTKPTQ. UTP contacts are provided by residues 188 to 193 and K224; that span reads KTKPTQ. Residues 292-534 form the Glutamine amidotransferase type-1 domain; sequence TIALVGKYVS…IGAARKYKES (243 aa). G354 lines the L-glutamine pocket. Residue C381 is the Nucleophile; for glutamine hydrolysis of the active site. L-glutamine is bound by residues 382–385, E405, and R462; that span reads LGMQ. Active-site residues include H507 and E509.

Belongs to the CTP synthase family. As to quaternary structure, homotetramer.

It carries out the reaction UTP + L-glutamine + ATP + H2O = CTP + L-glutamate + ADP + phosphate + 2 H(+). It catalyses the reaction L-glutamine + H2O = L-glutamate + NH4(+). The catalysed reaction is UTP + NH4(+) + ATP = CTP + ADP + phosphate + 2 H(+). Its pathway is pyrimidine metabolism; CTP biosynthesis via de novo pathway; CTP from UDP: step 2/2. Allosterically activated by GTP, when glutamine is the substrate; GTP has no effect on the reaction when ammonia is the substrate. The allosteric effector GTP functions by stabilizing the protein conformation that binds the tetrahedral intermediate(s) formed during glutamine hydrolysis. Inhibited by the product CTP, via allosteric rather than competitive inhibition. Catalyzes the ATP-dependent amination of UTP to CTP with either L-glutamine or ammonia as the source of nitrogen. Regulates intracellular CTP levels through interactions with the four ribonucleotide triphosphates. In Pelotomaculum thermopropionicum (strain DSM 13744 / JCM 10971 / SI), this protein is CTP synthase.